Reading from the N-terminus, the 777-residue chain is Gliding motility regulatory protein (777 aa).

The 108-residue stretch at 1–108 (MDTEALKKSL…SDLNEDLSGA (108 aa)) folds into the HPt domain. Histidine 49 carries the post-translational modification Phosphohistidine; by autocatalysis. 2 disordered regions span residues 129–149 (TPPA…PPAP) and 164–212 (PAPV…KSAV). Pro residues-rich tracts occupy residues 139 to 149 (VAPPPAPPPAP) and 164 to 177 (PAPV…PPTQ). A compositionally biased stretch (low complexity) spans 178–197 (APVAEPGAHAAAAAPHPAAA). One can recognise a Histidine kinase domain in the interval 270–509 (DISNEVREQL…TITLRLPQSL (240 aa)). In terms of domain architecture, CheW-like spans 511–645 (LMKVLLVRLG…VPDIMAEVRR (135 aa)). A Response regulatory domain is found at 660–776 (RVLLVDDSPI…EVLAQAIDRL (117 aa)). Position 709 is a 4-aspartylphosphate (aspartate 709).

It carries out the reaction ATP + protein L-histidine = ADP + protein N-phospho-L-histidine.. FrzE is involved in a sensory transduction pathway that controls the frequency at which cells reverse their gliding direction. FrzE seems to be capable of autophosphorylating itself on a histidine residue and then to transfer that group to an aspartate residue in the C-terminal part of the protein. This Myxococcus xanthus protein is Gliding motility regulatory protein (frzE).